The chain runs to 190 residues: Threonylcarbamoyl-AMP synthase (190 aa).

Residues 7–190 (TGSIAAAVDL…ALTGELFRQG (184 aa)) enclose the YrdC-like domain.

Belongs to the SUA5 family. TsaC subfamily.

The protein localises to the cytoplasm. The catalysed reaction is L-threonine + hydrogencarbonate + ATP = L-threonylcarbamoyladenylate + diphosphate + H2O. Required for the formation of a threonylcarbamoyl group on adenosine at position 37 (t(6)A37) in tRNAs that read codons beginning with adenine. Catalyzes the conversion of L-threonine, HCO(3)(-)/CO(2) and ATP to give threonylcarbamoyl-AMP (TC-AMP) as the acyladenylate intermediate, with the release of diphosphate. This is Threonylcarbamoyl-AMP synthase from Salmonella choleraesuis (strain SC-B67).